A 294-amino-acid polypeptide reads, in one-letter code: N-acetylmuramic acid 6-phosphate etherase (294 aa).

In terms of domain architecture, SIS spans 54 to 217 (VIQSFEEEGR…STASMIGVGK (164 aa)). The Proton donor role is filled by Glu-82. Glu-113 is a catalytic residue.

The protein belongs to the GCKR-like family. MurNAc-6-P etherase subfamily. Homodimer.

It catalyses the reaction N-acetyl-D-muramate 6-phosphate + H2O = N-acetyl-D-glucosamine 6-phosphate + (R)-lactate. It participates in amino-sugar metabolism; N-acetylmuramate degradation. Functionally, specifically catalyzes the cleavage of the D-lactyl ether substituent of MurNAc 6-phosphate, producing GlcNAc 6-phosphate and D-lactate. The sequence is that of N-acetylmuramic acid 6-phosphate etherase from Bacillus cereus (strain 03BB102).